We begin with the raw amino-acid sequence, 1872 residues long: Plexin-A3 (1872 aa).

A signal peptide spans 1–19 (MPTVCLLPLLFFTIGGCLG). Positions 20–489 (SSRPFRTFVV…SEKQVSQLPV (470 aa)) constitute a Sema domain. At 20–1220 (SSRPFRTFVV…ITADRALTLP (1201 aa)) the chain is on the extracellular side. N60 carries N-linked (GlcNAc...) asparagine glycosylation. 9 cysteine pairs are disulfide-bonded: C78–C87, C113–C121, C267–C388, C283–C339, C357–C376, C492–C509, C498–C540, C501–C518, and C512–C524. Residue N549 is glycosylated (N-linked (GlcNAc...) asparagine). A disulfide bridge connects residues C575 and C595. 4 IPT/TIG domains span residues 841–934 (PRIT…YSFV), 936–1021 (PTFD…YTYT), 1024–1123 (PTVT…FTYY), and 1126–1212 (PSFE…LHIT). The N-linked (GlcNAc...) asparagine glycan is linked to N1163. A helical membrane pass occupies residues 1221–1241 (AMVGLAAGGGLLLLAITVVLV). A coiled-coil region spans residues 1240–1294 (LVAYKRKTQDADRTLKRLQLQMDNLESRVALECKEAFAELQTDINELTNHMDGVQ). The Cytoplasmic portion of the chain corresponds to 1242 to 1872 (AYKRKTQDAD…QIITLVSSSS (631 aa)). Phosphoserine is present on S1597.

This sequence belongs to the plexin family. In terms of tissue distribution, detected in embryonic hindbrain, spinal cord, dorsal root ganglion, trigeminal ganglion and superior cervical ganglion. In newborns, detected throughout all layers of the hippocampus.

It localises to the cell membrane. Its function is as follows. Coreceptor for SEMA3A and SEMA3F. Necessary for signaling by class 3 semaphorins and subsequent remodeling of the cytoskeleton. Plays a role in axon guidance in the developing nervous system. Regulates the migration of sympathetic neurons, but not of neural crest precursors. Required for normal dendrite spine morphology in pyramidal neurons. May play a role in regulating semaphorin-mediated programmed cell death in the developing nervous system. Class 3 semaphorins bind to a complex composed of a neuropilin and a plexin. The plexin modulates the affinity of the complex for specific semaphorins, and its cytoplasmic domain is required for the activation of down-stream signaling events in the cytoplasm. In Mus musculus (Mouse), this protein is Plexin-A3 (Plxna3).